A 620-amino-acid polypeptide reads, in one-letter code: MGPRAQRARSTLRKLRRALCGRQDSPARARTPENRHFARKCARTCEHGYAHTHTCEDTPAKEHGHLGEHECLRGHGHAHAYEERCENKHKHLHAHEHTHERHGRAPRRLALTAPLPLLLLPLLLPPMILLFFLSPADAKPVLERQVFWNHSEPRASFLTPPHGPGAPPGGPFLTAVGGDGTLYLIPSNSSNPPVCVEIPLPYGPGHENVITLLLVDGGPRTPDALTVAACLEVGVSLLTTNATEPTNASNSSPRLTGSCEKLRTWALGNPPFTRVCGTGGGTPRCWALSTNGSIHDLGLDGVGYSPPQHNGTRPLLCTNTSEPHLHSCEHTAWNGDHDPQRCTRTPLDKHGQSWSPQCHKSTAPNQLGTRPPLLITKMSDENGTDYVYFLIGGSGDDYPPLLARVCEDDCWLSGHWTPRLQTVLQTNVSCANASALLKSTSGNGGPIVLLVEGEGGNGSICTYSGLDTGKHFAHTPQLGETGPRDPLVGACGHNGDVPESLAKKAREHPDLKQTLTPSGGPVALPGLDPRHVTALGTGPGLLFLGTNQSNVFLLRMNDNGRPNGSLTLFWNGTGNGNGRAGPRGPVLGLQHSSGGGAGAAGLLAVLFGDGVTVLRTEGAL.

A helical transmembrane segment spans residues Ala-113–Leu-133.

Its subcellular location is the host mitochondrion. The protein localises to the host membrane. Functionally, plays a role in the inhibition of host apoptosis. Prevents host TNF-alpha-induced mitochondrial membrane permeabilization and reduces caspase-3/CASP3 and PARP1 cleavage induced by the intrinsic apoptotic pathway. This chain is Apoptosis regulator MC163R (MC163R), found in Homo sapiens (Human).